A 286-amino-acid polypeptide reads, in one-letter code: 4-hydroxy-tetrahydrodipicolinate synthase 2 (286 aa).

Position 45 (threonine 45) interacts with pyruvate. Residue tyrosine 133 is the Proton donor/acceptor of the active site. Residue lysine 161 is the Schiff-base intermediate with substrate of the active site. Isoleucine 203 is a binding site for pyruvate.

It belongs to the DapA family. Homotetramer; dimer of dimers.

It localises to the cytoplasm. It carries out the reaction L-aspartate 4-semialdehyde + pyruvate = (2S,4S)-4-hydroxy-2,3,4,5-tetrahydrodipicolinate + H2O + H(+). It participates in amino-acid biosynthesis; L-lysine biosynthesis via DAP pathway; (S)-tetrahydrodipicolinate from L-aspartate: step 3/4. In terms of biological role, catalyzes the condensation of (S)-aspartate-beta-semialdehyde [(S)-ASA] and pyruvate to 4-hydroxy-tetrahydrodipicolinate (HTPA). In Clostridium acetobutylicum (strain ATCC 824 / DSM 792 / JCM 1419 / IAM 19013 / LMG 5710 / NBRC 13948 / NRRL B-527 / VKM B-1787 / 2291 / W), this protein is 4-hydroxy-tetrahydrodipicolinate synthase 2.